The primary structure comprises 407 residues: MMPLTAAREFMRLLTGRFLATRCPQVAGSLAFTTLLAIVPLLTVIIALFSNFPAFSRLGESLRTFLLENLLPDRAGQIIATYAFQFSQQAAGLTLIGTVLLVLTALMLLMTIDHVFNHIWGVRRPRPLLTRLMVHWFALTLGPLALGGSVLATGHLVATSIALAGEGSWVGATFARLVPTVLLGSLFSVLYYAVPNHPVRMLHALAGGIAAAIVFVLMQRLFGLFIVRIPTYTLIYGTFAVLPIFLVWLYLSWVVILLGAALSATLPSFFERARILRAFPGDRAWAAVTMLIALADAQHAGTTLPFATLQAGARVSSNEGEALLGEMRDAGWVAHTEEGNWLLSRQAAQIGLAAVVNRFALSPAAWREASDGDEASRRIAERLATALHSADLPLSALTSAGNRVQTG.

The next 6 membrane-spanning stretches (helical) occupy residues 29–49 (SLAF…IALF), 92–112 (GLTL…LMTI), 132–152 (LMVH…SVLA), 174–194 (FARL…YYAV), 207–227 (GGIA…LFIV), and 239–259 (FAVL…ILLG).

The protein belongs to the UPF0761 family.

The protein resides in the cell inner membrane. The polypeptide is UPF0761 membrane protein AZOSEA40600 (Aromatoleum aromaticum (strain DSM 19018 / LMG 30748 / EbN1) (Azoarcus sp. (strain EbN1))).